The chain runs to 719 residues: Ferric reductase transmembrane component 4 (719 aa).

A signal peptide spans 1–18 (MLLVHIISFLLFFQLSAA). Residues 19 to 156 (KAPPSKTSLI…YGYYYNHDIP (138 aa)) are Extracellular-facing. Residues Asn-51, Asn-80, Asn-101, Asn-113, Asn-127, and Asn-135 are each glycosylated (N-linked (GlcNAc...) asparagine). The helical transmembrane segment at 157–177 (YYFGGIICAYFVGVMLLAGLI) threads the bilayer. Topologically, residues 178-228 (RFLNYTPIKKIMFQQKLVNYVRGYTTLPTLYEKHAEPFSYLKVITGYLPTR) are cytoplasmic. The chain crosses the membrane as a helical span at residues 229 to 249 (FETLVILGYLILHTIFMAYKY). Residues 250–267 (QYDPYHIIFAAHRAEVAH) lie on the Extracellular side of the membrane. A helical transmembrane segment spans residues 268-288 (FVAYRSGILSFAHLPLIVLFA). The 135-residue stretch at 273-407 (SGILSFAHLP…SGIEWIYAAI (135 aa)) folds into the Ferric oxidoreductase domain. At 289 to 304 (GRNNFLQLISGLKHTS) the chain is on the cytoplasmic side. The chain crosses the membrane as a helical span at residues 305–325 (FIVFHKWLGRMMFLDAIIHAA). Residues His-309 and His-323 each coordinate heme. Topologically, residues 326-346 (GFTNYYLYYKKWNTVRLRVYW) are extracellular. A helical transmembrane segment spans residues 347–367 (KFGIATTCLAGMLIFFSIAAF). The Cytoplasmic segment spans residues 368–373 (RRHYYE). Residues 374-394 (TFMALHIVFAALFLYTCWEHV) form a helical membrane-spanning segment. The heme site is built by His-379 and His-393. Residue Thr-395 is a topological domain, extracellular. Residues 396–416 (NFSGIEWIYAAIAIWGVDRIV) form a helical membrane-spanning segment. The 120-residue stretch at 408–527 (AIWGVDRIVR…EGPYGSKSTA (120 aa)) folds into the FAD-binding FR-type domain. Residues 417–719 (RITRIALLGF…IEYLEEYQAW (303 aa)) lie on the Cytoplasmic side of the membrane. FAD is bound at residue 472-478 (HPFTVMD). 519–522 (GPYG) contacts NADP(+). 2 stretches are compositionally biased toward polar residues: residues 606–618 (EKIS…NGET) and 625–643 (SSLS…TELP). A disordered region spans residues 606–643 (EKISSNEVKNGETTAEKAPSSLSNSEKAPSESENTELP). An NADP(+)-binding site is contributed by 685–686 (CG).

This sequence belongs to the ferric reductase (FRE) family. FAD serves as cofactor.

It localises to the cell membrane. The enzyme catalyses 2 a Fe(II)-siderophore + NADP(+) + H(+) = 2 a Fe(III)-siderophore + NADPH. Its function is as follows. Siderophore-iron reductase responsible for reducing extracellular iron prior to import. Catalyzes the reductive uptake of Fe(3+) bound to dihydroxamate rhodotorulic acid. Fe(3+) is reduced to Fe(2+), which then dissociates from the siderophore and can be imported by the high-affinity Fe(2+) transport complex in the plasma membrane. The polypeptide is Ferric reductase transmembrane component 4 (FRE4) (Saccharomyces cerevisiae (strain ATCC 204508 / S288c) (Baker's yeast)).